We begin with the raw amino-acid sequence, 238 residues long: MSRLGLPEEPVRNSLLDDAKARLRKYDIGGKYSHLPYNKYSVLLPLVAKEGKLHLLFTVRSEKLRRAPGEVCFPGGKRDPTDMDDAATALREAQEEVGLRPHQVEVVCCLVPCLIDTDTLITPFVGLIDHNFQAQPNPAEVKDVFLVPLAYFLHPQVHDQHYVTRLGHRFINHIFEYTNPEDGVTYQIKGMTANLAVLVAFIILEKKPTFEVQFNLNDVLASSEELFLKVHKKATSRL.

Residue Lys20 is modified to N6-succinyllysine. Residues 37-172 (YNKYSVLLPL…VTRLGHRFIN (136 aa)) enclose the Nudix hydrolase domain. The short motif at 77–98 (KRDPTDMDDAATALREAQEEVG) is the Nudix box element. Glu92 and Glu96 together coordinate Mg(2+). The short motif at 236–238 (SRL) is the Microbody targeting signal element.

This sequence belongs to the Nudix hydrolase family. PCD1 subfamily. Monomer. It depends on Mn(2+) as a cofactor. Mg(2+) serves as cofactor. Expressed in liver, kidney, pancreas, pituitary, small intestine, spleen, heart and placenta. Weakly expressed in brain.

Its subcellular location is the peroxisome. The catalysed reaction is hexanoyl-CoA + H2O = hexanoyl-4'-phosphopantetheine + adenosine 3',5'-bisphosphate + 2 H(+). It catalyses the reaction octanoyl-CoA + H2O = S-octanoyl-4'-phosphopantetheine + adenosine 3',5'-bisphosphate + 2 H(+). It carries out the reaction butanoyl-CoA + H2O = S-butanoyl-4'-phosphopantetheine + adenosine 3',5'-bisphosphate + 2 H(+). The enzyme catalyses decanoyl-CoA + H2O = decanoyl-4'-phosphopantetheine + adenosine 3',5'-bisphosphate + 2 H(+). The catalysed reaction is dodecanoyl-CoA + H2O = S-dodecanoyl-4'-phosphopantetheine + adenosine 3',5'-bisphosphate + 2 H(+). It catalyses the reaction tetradecanoyl-CoA + H2O = tetradecanoyl-4'-phosphopantetheine + adenosine 3',5'-bisphosphate + 2 H(+). It carries out the reaction choloyl-CoA + H2O = S-choloyl-4'-phosphopantetheine + adenosine 3',5'-bisphosphate + 2 H(+). The enzyme catalyses 3alpha,7alpha,12alpha-trihydroxy-5beta-cholestan-26-oyl-CoA + H2O = 3alpha,7alpha,12alpha-trihydroxy-5beta-cholestan-26-oyl-4'-phosphopantetheine + adenosine 3',5'-bisphosphate + 2 H(+). The catalysed reaction is acetyl-CoA + H2O = S-acetyl-4'-phosphopantetheine + adenosine 3',5'-bisphosphate + 2 H(+). It catalyses the reaction CoA + H2O = (R)-4'-phosphopantetheine + adenosine 3',5'-bisphosphate + 2 H(+). It carries out the reaction propanoyl-CoA + H2O = propanoyl-4'-phosphopantetheine + adenosine 3',5'-bisphosphate + 2 H(+). The enzyme catalyses malonyl-CoA + H2O = malonyl-4'-phosphopantetheine + adenosine 3',5'-bisphosphate + 2 H(+). The catalysed reaction is succinyl-CoA + H2O = succinyl-4'-phosphopantetheine + adenosine 3',5'-bisphosphate + 2 H(+). It catalyses the reaction a 5'-end CoA-ribonucleoside in mRNA + H2O = a 5'-end phospho-adenosine-phospho-ribonucleoside in mRNA + (R)-4'-phosphopantetheine + 2 H(+). Its activity is regulated as follows. Inhibited by fluoride. Fatty acyl-coenzyme A (CoA) diphosphatase that hydrolyzes fatty acyl-CoA to yield acyl-4'-phosphopantetheine and adenosine 3',5'-bisphosphate. Cleaves CoA, CoA esters and oxidized CoA with similar efficiencies. Preferentially hydrolyzes medium-chain acyl-CoAs and bile acid-CoAs. Has no activity toward NDP-sugars, CDP-alcohols, (deoxy)nucleoside 5'-triphosphates, nucleoside 5'-di or monophosphates, diadenosine polyphosphates, NAD, NADH, NADP, NADPH or thymidine-5'-monophospho-p-nitrophenyl ester. May be required to eliminate oxidized CoA from peroxisomes, or regulate CoA and acyl-CoA levels in this organelle in response to metabolic demand. Does not play a role in U8 snoRNA decapping activity. Binds U8 snoRNA. Exhibits decapping activity towards dpCoA-capped RNAs in vitro. The chain is Peroxisomal coenzyme A diphosphatase NUDT7 from Homo sapiens (Human).